The following is a 305-amino-acid chain: tRNA uridine(34) hydroxylase (305 aa).

The region spanning 125-219 (ADENTVVVDT…YLEEVPREQS (95 aa)) is the Rhodanese domain. Cys179 (cysteine persulfide intermediate) is an active-site residue.

It belongs to the TrhO family.

The catalysed reaction is uridine(34) in tRNA + AH2 + O2 = 5-hydroxyuridine(34) in tRNA + A + H2O. Functionally, catalyzes oxygen-dependent 5-hydroxyuridine (ho5U) modification at position 34 in tRNAs. The sequence is that of tRNA uridine(34) hydroxylase from Brucella ovis (strain ATCC 25840 / 63/290 / NCTC 10512).